The sequence spans 212 residues: Imidazole glycerol phosphate synthase subunit HisH (212 aa).

A Glutamine amidotransferase type-1 domain is found at 1 to 212 (MLAILDYKAG…YEYCKEVSDA (212 aa)). Cysteine 79 (nucleophile) is an active-site residue. Active-site residues include histidine 187 and glutamate 189.

In terms of assembly, heterodimer of HisH and HisF.

It localises to the cytoplasm. It carries out the reaction 5-[(5-phospho-1-deoxy-D-ribulos-1-ylimino)methylamino]-1-(5-phospho-beta-D-ribosyl)imidazole-4-carboxamide + L-glutamine = D-erythro-1-(imidazol-4-yl)glycerol 3-phosphate + 5-amino-1-(5-phospho-beta-D-ribosyl)imidazole-4-carboxamide + L-glutamate + H(+). The catalysed reaction is L-glutamine + H2O = L-glutamate + NH4(+). Its pathway is amino-acid biosynthesis; L-histidine biosynthesis; L-histidine from 5-phospho-alpha-D-ribose 1-diphosphate: step 5/9. Functionally, IGPS catalyzes the conversion of PRFAR and glutamine to IGP, AICAR and glutamate. The HisH subunit catalyzes the hydrolysis of glutamine to glutamate and ammonia as part of the synthesis of IGP and AICAR. The resulting ammonia molecule is channeled to the active site of HisF. This chain is Imidazole glycerol phosphate synthase subunit HisH, found in Maridesulfovibrio salexigens (strain ATCC 14822 / DSM 2638 / NCIMB 8403 / VKM B-1763) (Desulfovibrio salexigens).